Consider the following 673-residue polypeptide: Hemocyanin subunit C (673 aa).

Residues 1-20 (MGAWKVWTFFAIALVVAVKA) form the signal peptide. Residues histidine 207, histidine 211, and histidine 237 each coordinate Cu cation. Asparagine 323 is a glycosylation site (N-linked (GlcNAc...) asparagine). Histidine 358, histidine 362, and histidine 398 together coordinate Cu cation. Cysteines 568 and 616 form a disulfide.

It belongs to the tyrosinase family. Hemocyanin subfamily. As to quaternary structure, 36-chain polymer consisting of 6 hexamers, each of which includes 4 different chains, A, B, C and D. In terms of tissue distribution, hemolymph.

It localises to the secreted. Its subcellular location is the extracellular space. In terms of biological role, hemocyanins are copper-containing oxygen carriers occurring freely dissolved in the hemolymph of many mollusks and arthropods. The chain is Hemocyanin subunit C (HCC) from Scutigera coleoptrata (House centipede).